A 690-amino-acid polypeptide reads, in one-letter code: MHEHDSHGEAAHSNSEDMQMIHQHHEHHGHEEEHSAHHEKMKHSADHGDHHRMMMEDFKKRFYVSTLLTIPILILSPAIQTFLGFRVEFAGSLYILFLLSSAVYFYGGYPFLKGIFDELRRRQPGMMTLIAVAISVAYFYSSAVVFGLKGKFFFWELATLIDIMLLGHYIEMRSVLGASRALEELVKIMPSEAHLLKDGEIVEVKVENLKPGDKVLVKPGEKIPVDGIVVEGESFVNEAMLTGESKPVAKKPGDTVIGGAINGEGSLVVEVEKTGKDTYLNQVIELVRQAQESKSRTQDLANRAALLLTVIALTVGSVTLAIWLAYIADFAFAIERAVTVMVITCPHALGLAIPLVVAVSTSLAAKSGLLIRDRQAFERAKDLQAVIFDKTGTLTEGRFGVTDIVGFNHSEDELLQIAASLEARSEHPIAAAIVEEAEKRGFGLTEVEEFRAIPGKGVEGIVNGRRYMVVSPGYIRELGIKTDESVEKLKQQGKTVVFILKNGEVSGVIALADRIRPESREAISKLKAIGIKCMMLTGDNRFVAKWVAEELGLDDYFAEVLPHEKAEKVKEVQQKYVTAMVGDGVNDAPALAQADVGIAIGAGTDVAVETADIVLVRNDPRDVAAIVELSRKTYSKMKQNLLWATGYNAFAIPLAAGVLYSAGILLSPAVGAILMSLSTVIVAINARLLR.

At 1–64 (MHEHDSHGEA…MEDFKKRFYV (64 aa)) the chain is on the cytoplasmic side. The segment at 23-46 (QHHEHHGHEEEHSAHHEKMKHSAD) is disordered. The segment covering 28 to 46 (HGHEEEHSAHHEKMKHSAD) has biased composition (basic and acidic residues). The chain crosses the membrane as a helical span at residues 65-85 (STLLTIPILILSPAIQTFLGF). At 86 to 91 (RVEFAG) the chain is on the extracellular side. Residues 92–112 (SLYILFLLSSAVYFYGGYPFL) traverse the membrane as a helical segment. The Cytoplasmic segment spans residues 113–127 (KGIFDELRRRQPGMM). The chain crosses the membrane as a helical span at residues 128 to 148 (TLIAVAISVAYFYSSAVVFGL). Residues 149–151 (KGK) lie on the Extracellular side of the membrane. A helical transmembrane segment spans residues 152–172 (FFFWELATLIDIMLLGHYIEM). Residues 173-303 (RSVLGASRAL…KSRTQDLANR (131 aa)) lie on the Cytoplasmic side of the membrane. The chain crosses the membrane as a helical span at residues 304-324 (AALLLTVIALTVGSVTLAIWL). Over 325 to 336 (AYIADFAFAIER) the chain is Extracellular. Residues 337–357 (AVTVMVITCPHALGLAIPLVV) form a helical membrane-spanning segment. Residues 358–640 (AVSTSLAAKS…RKTYSKMKQN (283 aa)) lie on the Cytoplasmic side of the membrane. Asp-389 (4-aspartylphosphate intermediate) is an active-site residue. Phosphate is bound by residues 390 to 391 (KT), 537 to 538 (TG), and Lys-565. Residues Asp-583 and Asp-587 each coordinate Mg(2+). The helical transmembrane segment at 641–661 (LLWATGYNAFAIPLAAGVLYS) threads the bilayer. The Extracellular portion of the chain corresponds to 662 to 663 (AG). A helical membrane pass occupies residues 664–684 (ILLSPAVGAILMSLSTVIVAI). Residues 685–690 (NARLLR) are Cytoplasmic-facing.

Belongs to the cation transport ATPase (P-type) (TC 3.A.3) family. Type IB subfamily.

It localises to the cell membrane. It carries out the reaction Cu(2+)(in) + ATP + H2O = Cu(2+)(out) + ADP + phosphate + H(+). Its activity is regulated as follows. Activated by Cu(2+) and to a lesser extent by Ag(+) and Cu(+). In terms of biological role, involved in copper export. This is Copper-exporting P-type ATPase B (copB) from Archaeoglobus fulgidus (strain ATCC 49558 / DSM 4304 / JCM 9628 / NBRC 100126 / VC-16).